We begin with the raw amino-acid sequence, 353 residues long: Photosystem II protein D1 (353 aa).

At threonine 2 the chain carries N-acetylthreonine. The residue at position 2 (threonine 2) is a Phosphothreonine. A run of 3 helical transmembrane segments spans residues 29 to 46, 118 to 133, and 142 to 156; these read YIGW…TATS, HFLL…EWEL, and WIAV…AATA. A chlorophyll a-binding site is contributed by histidine 118. Tyrosine 126 is a binding site for pheophytin a. 2 residues coordinate [CaMn4O5] cluster: aspartate 170 and glutamate 189. A helical transmembrane segment spans residues 197–218; it reads FHMLGVAGVFGGSLFSAMHGSL. Position 198 (histidine 198) interacts with chlorophyll a. A quinone is bound by residues histidine 215 and 264 to 265; that span reads SF. Histidine 215 lines the Fe cation pocket. Histidine 272 provides a ligand contact to Fe cation. A helical membrane pass occupies residues 274–288; the sequence is FLAAWPVVGIWFTAL. [CaMn4O5] cluster is bound by residues histidine 332, glutamate 333, aspartate 342, and alanine 344. Positions 345–353 are excised as a propeptide; that stretch reads AIEAPSTNG.

The protein belongs to the reaction center PufL/M/PsbA/D family. PSII is composed of 1 copy each of membrane proteins PsbA, PsbB, PsbC, PsbD, PsbE, PsbF, PsbH, PsbI, PsbJ, PsbK, PsbL, PsbM, PsbT, PsbX, PsbY, PsbZ, Psb30/Ycf12, at least 3 peripheral proteins of the oxygen-evolving complex and a large number of cofactors. It forms dimeric complexes. The D1/D2 heterodimer binds P680, chlorophylls that are the primary electron donor of PSII, and subsequent electron acceptors. It shares a non-heme iron and each subunit binds pheophytin, quinone, additional chlorophylls, carotenoids and lipids. D1 provides most of the ligands for the Mn4-Ca-O5 cluster of the oxygen-evolving complex (OEC). There is also a Cl(-1) ion associated with D1 and D2, which is required for oxygen evolution. The PSII complex binds additional chlorophylls, carotenoids and specific lipids. is required as a cofactor. Post-translationally, tyr-161 forms a radical intermediate that is referred to as redox-active TyrZ, YZ or Y-Z. In terms of processing, C-terminally processed by CTPA; processing is essential to allow assembly of the oxygen-evolving complex and thus photosynthetic growth.

The protein resides in the plastid. It is found in the chloroplast thylakoid membrane. The catalysed reaction is 2 a plastoquinone + 4 hnu + 2 H2O = 2 a plastoquinol + O2. Photosystem II (PSII) is a light-driven water:plastoquinone oxidoreductase that uses light energy to abstract electrons from H(2)O, generating O(2) and a proton gradient subsequently used for ATP formation. It consists of a core antenna complex that captures photons, and an electron transfer chain that converts photonic excitation into a charge separation. The D1/D2 (PsbA/PsbD) reaction center heterodimer binds P680, the primary electron donor of PSII as well as several subsequent electron acceptors. The protein is Photosystem II protein D1 of Petunia hybrida (Petunia).